The chain runs to 178 residues: NADH-quinone oxidoreductase subunit I 2 (178 aa).

4Fe-4S ferredoxin-type domains follow at residues 46–78 and 88–117; these read IVLT…MQAA and AWFR…LTPF. Residues C58, C61, C64, C68, C97, C100, C103, and C107 each coordinate [4Fe-4S] cluster.

Belongs to the complex I 23 kDa subunit family. As to quaternary structure, NDH-1 is composed of 14 different subunits. Subunits NuoA, H, J, K, L, M, N constitute the membrane sector of the complex. Requires [4Fe-4S] cluster as cofactor.

Its subcellular location is the cell inner membrane. The enzyme catalyses a quinone + NADH + 5 H(+)(in) = a quinol + NAD(+) + 4 H(+)(out). Its function is as follows. NDH-1 shuttles electrons from NADH, via FMN and iron-sulfur (Fe-S) centers, to quinones in the respiratory chain. The immediate electron acceptor for the enzyme in this species is believed to be ubiquinone. Couples the redox reaction to proton translocation (for every two electrons transferred, four hydrogen ions are translocated across the cytoplasmic membrane), and thus conserves the redox energy in a proton gradient. The protein is NADH-quinone oxidoreductase subunit I 2 of Syntrophobacter fumaroxidans (strain DSM 10017 / MPOB).